We begin with the raw amino-acid sequence, 139 residues long: uncharacterized protein (139 aa).

A helical transmembrane segment spans residues 77 to 97 (YCFFFFLVLFLNGIIATRGKA).

Its subcellular location is the mitochondrion membrane. This is an uncharacterized protein from Arabidopsis thaliana (Mouse-ear cress).